Reading from the N-terminus, the 212-residue chain is Ribonuclease HII (212 aa).

Positions 20–209 constitute an RNase H type-2 domain; it reads TCVVGVDEVG…VHNILYQEAS (190 aa). A divalent metal cation contacts are provided by aspartate 26, glutamate 27, and aspartate 117.

Belongs to the RNase HII family. Mn(2+) is required as a cofactor. The cofactor is Mg(2+).

It localises to the cytoplasm. The catalysed reaction is Endonucleolytic cleavage to 5'-phosphomonoester.. In terms of biological role, endonuclease that specifically degrades the RNA of RNA-DNA hybrids. The protein is Ribonuclease HII of Cereibacter sphaeroides (strain ATCC 17023 / DSM 158 / JCM 6121 / CCUG 31486 / LMG 2827 / NBRC 12203 / NCIMB 8253 / ATH 2.4.1.) (Rhodobacter sphaeroides).